Consider the following 216-residue polypeptide: Trimethylamine corrinoid protein 1 (216 aa).

The B12-binding N-terminal domain occupies 1–92 (MANKEEIIAK…EMEKRKSQTK (92 aa)). The B12-binding domain maps to 94 to 216 (LGTIVIGTIE…VVSKVKAALL (123 aa)). His107 provides a ligand contact to methylcob(III)alamin.

It belongs to the methylamine corrinoid protein family. In terms of assembly, can form a complex with MttB.

It functions in the pathway one-carbon metabolism; methanogenesis from trimethylamine. In terms of biological role, acts probably as a methyl group carrier between MttB and either MtbA or MtaA. This chain is Trimethylamine corrinoid protein 1 (mttC1), found in Methanosarcina mazei (strain ATCC BAA-159 / DSM 3647 / Goe1 / Go1 / JCM 11833 / OCM 88) (Methanosarcina frisia).